Consider the following 406-residue polypeptide: Cysteine desulfurase (406 aa).

The residue at position 226 (Lys226) is an N6-(pyridoxal phosphate)lysine. Cys364 serves as the catalytic Cysteine persulfide intermediate.

This sequence belongs to the class-V pyridoxal-phosphate-dependent aminotransferase family. Csd subfamily. Homodimer. Interacts with SufE and the SufBCD complex composed of SufB, SufC and SufD. The interaction with SufE is required to mediate the direct transfer of the sulfur atom from the S-sulfanylcysteine. It depends on pyridoxal 5'-phosphate as a cofactor.

Its subcellular location is the cytoplasm. It catalyses the reaction (sulfur carrier)-H + L-cysteine = (sulfur carrier)-SH + L-alanine. The enzyme catalyses L-selenocysteine + AH2 = hydrogenselenide + L-alanine + A + H(+). The protein operates within cofactor biosynthesis; iron-sulfur cluster biosynthesis. In terms of biological role, cysteine desulfurases mobilize the sulfur from L-cysteine to yield L-alanine, an essential step in sulfur metabolism for biosynthesis of a variety of sulfur-containing biomolecules. Component of the suf operon, which is activated and required under specific conditions such as oxidative stress and iron limitation. Acts as a potent selenocysteine lyase in vitro, that mobilizes selenium from L-selenocysteine. Selenocysteine lyase activity is however unsure in vivo. This Escherichia coli O17:K52:H18 (strain UMN026 / ExPEC) protein is Cysteine desulfurase.